A 232-amino-acid chain; its full sequence is Large ribosomal subunit protein uL1 (232 aa).

It belongs to the universal ribosomal protein uL1 family. As to quaternary structure, part of the 50S ribosomal subunit.

Its function is as follows. Binds directly to 23S rRNA. The L1 stalk is quite mobile in the ribosome, and is involved in E site tRNA release. In terms of biological role, protein L1 is also a translational repressor protein, it controls the translation of the L11 operon by binding to its mRNA. In Bacillus licheniformis (strain ATCC 14580 / DSM 13 / JCM 2505 / CCUG 7422 / NBRC 12200 / NCIMB 9375 / NCTC 10341 / NRRL NRS-1264 / Gibson 46), this protein is Large ribosomal subunit protein uL1.